Here is a 344-residue protein sequence, read N- to C-terminus: GTP 3',8-cyclase (344 aa).

The Radical SAM core domain occupies 19–245 (PFGRAVTYLR…DIPYRTGGPA (227 aa)). GTP is bound at residue R28. 2 residues coordinate [4Fe-4S] cluster: C35 and C39. Y41 contributes to the S-adenosyl-L-methionine binding site. Residue C42 coordinates [4Fe-4S] cluster. GTP is bound at residue R77. An S-adenosyl-L-methionine-binding site is contributed by G81. T111 provides a ligand contact to GTP. S135 is a binding site for S-adenosyl-L-methionine. K171 lines the GTP pocket. S-adenosyl-L-methionine is bound at residue M205. Residues C268 and C271 each coordinate [4Fe-4S] cluster. 273–275 (RVR) contributes to the GTP binding site. C285 lines the [4Fe-4S] cluster pocket.

It belongs to the radical SAM superfamily. MoaA family. As to quaternary structure, monomer and homodimer. [4Fe-4S] cluster serves as cofactor.

The enzyme catalyses GTP + AH2 + S-adenosyl-L-methionine = (8S)-3',8-cyclo-7,8-dihydroguanosine 5'-triphosphate + 5'-deoxyadenosine + L-methionine + A + H(+). It participates in cofactor biosynthesis; molybdopterin biosynthesis. Functionally, catalyzes the cyclization of GTP to (8S)-3',8-cyclo-7,8-dihydroguanosine 5'-triphosphate. The protein is GTP 3',8-cyclase of Brucella ovis (strain ATCC 25840 / 63/290 / NCTC 10512).